The following is a 194-amino-acid chain: ATP-dependent Clp protease proteolytic subunit (194 aa).

The active-site Nucleophile is Ser-98. His-123 is a catalytic residue.

The protein belongs to the peptidase S14 family. In terms of assembly, fourteen ClpP subunits assemble into 2 heptameric rings which stack back to back to give a disk-like structure with a central cavity, resembling the structure of eukaryotic proteasomes.

Its subcellular location is the cytoplasm. It carries out the reaction Hydrolysis of proteins to small peptides in the presence of ATP and magnesium. alpha-casein is the usual test substrate. In the absence of ATP, only oligopeptides shorter than five residues are hydrolyzed (such as succinyl-Leu-Tyr-|-NHMec, and Leu-Tyr-Leu-|-Tyr-Trp, in which cleavage of the -Tyr-|-Leu- and -Tyr-|-Trp bonds also occurs).. Cleaves peptides in various proteins in a process that requires ATP hydrolysis. Has a chymotrypsin-like activity. Plays a major role in the degradation of misfolded proteins. The chain is ATP-dependent Clp protease proteolytic subunit from Clostridium tetani (strain Massachusetts / E88).